Consider the following 169-residue polypeptide: S-ribosylhomocysteine lyase (169 aa).

Fe cation contacts are provided by His-54, His-58, and Cys-128.

This sequence belongs to the LuxS family. As to quaternary structure, homodimer. The cofactor is Fe cation.

It carries out the reaction S-(5-deoxy-D-ribos-5-yl)-L-homocysteine = (S)-4,5-dihydroxypentane-2,3-dione + L-homocysteine. In terms of biological role, involved in the synthesis of autoinducer 2 (AI-2) which is secreted by bacteria and is used to communicate both the cell density and the metabolic potential of the environment. The regulation of gene expression in response to changes in cell density is called quorum sensing. Catalyzes the transformation of S-ribosylhomocysteine (RHC) to homocysteine (HC) and 4,5-dihydroxy-2,3-pentadione (DPD). The polypeptide is S-ribosylhomocysteine lyase (Shewanella putrefaciens (strain CN-32 / ATCC BAA-453)).